Consider the following 377-residue polypeptide: MFMQDSDSIGIVSARRVHFDTPLSLKSRAVLDSYELVYETYGELNPERSNAILVCHALSGNHHVAGVYADNPKNTGWWNNMIGPGKPIDTRKFFVIGINNLGGCHGSTGPISINNRTGKRYGPDFPLVTTSDWAKTYVRFADQFGIDCFAAIIGGSLGGMSAMQLALDAPERVRHVAVIAASARLTAQNIAFNDVARQAILTDPDFHGGDYYSHGTHPRRGLRLARMLGHITYLSDDSMASKFGRELRNGSLAFNYDVEFQIESYLHYQGDKFADLFDANTYLLMTKALDYFDPAQDYDGNLSAAFARAQADFLVLSFTSDWRFSPERSREIVKALLDNKLNVSYAEIPSTYGHDSFLMQDDYYHQLVRAYMDNISI.

Positions 50-358 (NAILVCHALS…PSTYGHDSFL (309 aa)) constitute an AB hydrolase-1 domain. Serine 156 serves as the catalytic Nucleophile. Arginine 226 is a binding site for substrate. Catalysis depends on residues aspartate 321 and histidine 354. Aspartate 355 lines the substrate pocket.

The protein belongs to the AB hydrolase superfamily. MetX family. In terms of assembly, homodimer.

The protein resides in the cytoplasm. It catalyses the reaction L-homoserine + succinyl-CoA = O-succinyl-L-homoserine + CoA. The protein operates within amino-acid biosynthesis; L-methionine biosynthesis via de novo pathway; O-succinyl-L-homoserine from L-homoserine: step 1/1. In terms of biological role, transfers a succinyl group from succinyl-CoA to L-homoserine, forming succinyl-L-homoserine. This Nitrosomonas eutropha (strain DSM 101675 / C91 / Nm57) protein is Homoserine O-succinyltransferase.